Here is a 406-residue protein sequence, read N- to C-terminus: Tyrosine--tRNA ligase (406 aa).

L-tyrosine is bound at residue Tyr-35. The 'HIGH' region signature appears at 40-49 (ATSASLHIGH). Positions 167 and 171 each coordinate L-tyrosine. The 'KMSKS' region motif lies at 227-231 (KMGKS). An ATP-binding site is contributed by Lys-230. Residues 341–405 (ILLVDLMVLA…IGKKKILRIV (65 aa)) form the S4 RNA-binding domain.

This sequence belongs to the class-I aminoacyl-tRNA synthetase family. TyrS type 1 subfamily. Homodimer.

Its subcellular location is the cytoplasm. The enzyme catalyses tRNA(Tyr) + L-tyrosine + ATP = L-tyrosyl-tRNA(Tyr) + AMP + diphosphate + H(+). Functionally, catalyzes the attachment of tyrosine to tRNA(Tyr) in a two-step reaction: tyrosine is first activated by ATP to form Tyr-AMP and then transferred to the acceptor end of tRNA(Tyr). In Borrelia recurrentis (strain A1), this protein is Tyrosine--tRNA ligase.